The chain runs to 183 residues: Glutathione-regulated potassium-efflux system ancillary protein KefG (183 aa).

Belongs to the NAD(P)H dehydrogenase (quinone) family. KefG subfamily. As to quaternary structure, interacts with KefB.

It localises to the cell inner membrane. It carries out the reaction a quinone + NADH + H(+) = a quinol + NAD(+). The enzyme catalyses a quinone + NADPH + H(+) = a quinol + NADP(+). Regulatory subunit of a potassium efflux system that confers protection against electrophiles. Required for full activity of KefB. This is Glutathione-regulated potassium-efflux system ancillary protein KefG from Pectobacterium carotovorum subsp. carotovorum (strain PC1).